The primary structure comprises 552 residues: CTP synthase (552 aa).

Residues 1–270 (MTKFVFVTGG…DGLICDKLRL (270 aa)) form an amidoligase domain region. Ser-13 contributes to the CTP binding site. Ser-13 contacts UTP. Residues 14–19 (SLGKGI) and Asp-71 contribute to the ATP site. Mg(2+)-binding residues include Asp-71 and Glu-144. CTP is bound by residues 151–153 (DIE), 191–196 (KTKPTQ), and Lys-227. UTP is bound by residues 191 to 196 (KTKPTQ) and Lys-227. The 254-residue stretch at 295–548 (QIAMVGKYVE…IKAAVEHQKP (254 aa)) folds into the Glutamine amidotransferase type-1 domain. Gly-357 contacts L-glutamine. The active-site Nucleophile; for glutamine hydrolysis is Cys-384. L-glutamine is bound by residues 385–388 (LGMQ) and Glu-408. The segment at 432–451 (KTRSENSDLGGTMRLGAQSS) is disordered. Position 474 (Arg-474) interacts with L-glutamine. Residues His-521 and Glu-523 contribute to the active site.

The protein belongs to the CTP synthase family. Homotetramer.

It carries out the reaction UTP + L-glutamine + ATP + H2O = CTP + L-glutamate + ADP + phosphate + 2 H(+). The catalysed reaction is L-glutamine + H2O = L-glutamate + NH4(+). The enzyme catalyses UTP + NH4(+) + ATP = CTP + ADP + phosphate + 2 H(+). Its pathway is pyrimidine metabolism; CTP biosynthesis via de novo pathway; CTP from UDP: step 2/2. With respect to regulation, allosterically activated by GTP, when glutamine is the substrate; GTP has no effect on the reaction when ammonia is the substrate. The allosteric effector GTP functions by stabilizing the protein conformation that binds the tetrahedral intermediate(s) formed during glutamine hydrolysis. Inhibited by the product CTP, via allosteric rather than competitive inhibition. Its function is as follows. Catalyzes the ATP-dependent amination of UTP to CTP with either L-glutamine or ammonia as the source of nitrogen. Regulates intracellular CTP levels through interactions with the four ribonucleotide triphosphates. The sequence is that of CTP synthase from Acidovorax sp. (strain JS42).